The primary structure comprises 539 residues: MEFECQERLEAANDQRSESGLLNTDLRIGNDGSVEIPNVKLCCQKKKGTLVPSGSKQLLSDKDLSTTIIDLPQALISEILNCLDPKELGLVSCVSTYLHRLASEHHAWKEFYRERWGLPVVFGAASSGLSDERSWKDLFVEREFRSRTFLGRYSIDTLYGHTEAVRTVFLLASAKLVFTSGYDSIVRMWDMEEGLSIAASKPLGCTIRALAADTKLLVAGGTDGFIHCWKSLDGLRNLFDLTGFQKEKTEFRLWGHEGPITSLALDMTSIFSGSWDMSVRIWDRSSMKCVKTLRHSDWVWGLAPHETTLASTSGSDVYIWDVSSETPLAIIPDAHEGTTYSLARSHTGDFLFTGGEDGGIKMFEIRRYGSETSVVLISQWMPHTSPVYSLSFEFPWLVSASGDGKLALIDVRKLLKTNRCAYSKRISSSTVEPPQRMLHGFGSNLFSVDVGYDRIVCGGEEGTVRIWNFTQALEIERRTRALKGMRHENRMRRRRMQMEMNAKNGRPDQCSIAAHKNPINGERNRAWHSKRRASGKAKA.

An F-box domain is found at 65 to 111 (STTIIDLPQALISEILNCLDPKELGLVSCVSTYLHRLASEHHAWKEF). 7 WD repeats span residues 160–199 (GHTE…SIAA), 201–239 (KPLG…RNLF), 255–292 (GHEG…CVKT), 294–330 (RHSD…PLAI), 334–373 (AHEG…SETS), 382–419 (PHTS…KTNR), and 433–477 (PPQR…EIER). A disordered region spans residues 505–539 (GRPDQCSIAAHKNPINGERNRAWHSKRRASGKAKA). Residues 526–539 (AWHSKRRASGKAKA) are compositionally biased toward basic residues.

The protein is F-box/WD-40 repeat-containing protein At5g21040 of Arabidopsis thaliana (Mouse-ear cress).